Consider the following 233-residue polypeptide: 7-cyano-7-deazaguanine synthase (233 aa).

Position 7–17 (7–17 (LSGGLDSAVTS)) interacts with ATP. Zn(2+) contacts are provided by Cys195, Cys206, Cys209, and Cys212.

It belongs to the QueC family. Zn(2+) serves as cofactor.

It carries out the reaction 7-carboxy-7-deazaguanine + NH4(+) + ATP = 7-cyano-7-deazaguanine + ADP + phosphate + H2O + H(+). It participates in purine metabolism; 7-cyano-7-deazaguanine biosynthesis. Catalyzes the ATP-dependent conversion of 7-carboxy-7-deazaguanine (CDG) to 7-cyano-7-deazaguanine (preQ(0)). The polypeptide is 7-cyano-7-deazaguanine synthase (Methanococcus maripaludis (strain C6 / ATCC BAA-1332)).